Reading from the N-terminus, the 734-residue chain is Photosystem I P700 chlorophyll a apoprotein A2 (734 aa).

Transmembrane regions (helical) follow at residues 46-69 (IFAS…FHVA), 135-158 (LYTG…LHLQ), 175-199 (LNHH…HVAI), 273-291 (IAHH…GHMY), 330-353 (IHFQ…QHMY), 369-395 (AALY…IFFI), 417-439 (AIIS…LYVH), and 517-535 (FLVH…LILV). The [4Fe-4S] cluster site is built by cysteine 559 and cysteine 568. Helical transmembrane passes span 575–596 (AFYL…YWHW) and 643–665 (LSVW…MFLI). 3 residues coordinate chlorophyll a: histidine 654, methionine 662, and tyrosine 670. Phylloquinone is bound at residue tryptophan 671. A helical membrane pass occupies residues 707–727 (LVGLAHFSVGYIFTYAAFLIA).

Belongs to the PsaA/PsaB family. The PsaA/B heterodimer binds the P700 chlorophyll special pair and subsequent electron acceptors. PSI consists of a core antenna complex that captures photons, and an electron transfer chain that converts photonic excitation into a charge separation. The eukaryotic PSI reaction center is composed of at least 11 subunits. Requires P700 is a chlorophyll a/chlorophyll a' dimer, A0 is one or more chlorophyll a, A1 is one or both phylloquinones and FX is a shared 4Fe-4S iron-sulfur center. as cofactor.

The protein resides in the plastid. It localises to the chloroplast thylakoid membrane. The enzyme catalyses reduced [plastocyanin] + hnu + oxidized [2Fe-2S]-[ferredoxin] = oxidized [plastocyanin] + reduced [2Fe-2S]-[ferredoxin]. In terms of biological role, psaA and PsaB bind P700, the primary electron donor of photosystem I (PSI), as well as the electron acceptors A0, A1 and FX. PSI is a plastocyanin-ferredoxin oxidoreductase, converting photonic excitation into a charge separation, which transfers an electron from the donor P700 chlorophyll pair to the spectroscopically characterized acceptors A0, A1, FX, FA and FB in turn. Oxidized P700 is reduced on the lumenal side of the thylakoid membrane by plastocyanin. The chain is Photosystem I P700 chlorophyll a apoprotein A2 from Vitis vinifera (Grape).